The sequence spans 251 residues: Imidazole glycerol phosphate synthase subunit HisF (251 aa).

Residues aspartate 11 and aspartate 130 contribute to the active site.

This sequence belongs to the HisA/HisF family. As to quaternary structure, heterodimer of HisH and HisF.

The protein resides in the cytoplasm. The enzyme catalyses 5-[(5-phospho-1-deoxy-D-ribulos-1-ylimino)methylamino]-1-(5-phospho-beta-D-ribosyl)imidazole-4-carboxamide + L-glutamine = D-erythro-1-(imidazol-4-yl)glycerol 3-phosphate + 5-amino-1-(5-phospho-beta-D-ribosyl)imidazole-4-carboxamide + L-glutamate + H(+). It functions in the pathway amino-acid biosynthesis; L-histidine biosynthesis; L-histidine from 5-phospho-alpha-D-ribose 1-diphosphate: step 5/9. IGPS catalyzes the conversion of PRFAR and glutamine to IGP, AICAR and glutamate. The HisF subunit catalyzes the cyclization activity that produces IGP and AICAR from PRFAR using the ammonia provided by the HisH subunit. In Listeria welshimeri serovar 6b (strain ATCC 35897 / DSM 20650 / CCUG 15529 / CIP 8149 / NCTC 11857 / SLCC 5334 / V8), this protein is Imidazole glycerol phosphate synthase subunit HisF.